Reading from the N-terminus, the 495-residue chain is MVMEVDEPAVAATTSQNQPQEHANDFDMDTSEGPIENDETFEPVDQINWKFNQVKGNIDADVHTEADVISCVEFSHDGEYLATGDKGGRVVIFQRDQSGKYVKGVRSREYNVYSTFQSHEPEFDYLKSLEIDEKINQIRWLKKKNAANFILSTNDKTIKLWKISERERKIGDDAWNLPRTNRINTSSFRGRLQIPSIVPMELIVEASPRRVYGNAHTYHVNSISVNSDQETFLSADDLRVNLWNLEITNESFNIVDIKPANMEELTEVITAAEFHPTQCNWFVYSSSKGSIRLCDMRDRALCDAYAKIFEEPEDPQSRSFFSEIIASVSDVKFSHNGRYLLTRDYLTVKVWDLNMESQPVETYPVHNYLRTKLCALYENDSIFDKFECDWSGDDKHILTGSYHNLFRSYARGNNQDAKTWEARPQEPHSQLRSRFVVPSAKRKRNNLSSSGETTEEDLSSDQLQFDRKILHTAWHPKDNIIALAATNNLYIFSDV.

The segment at 1–27 (MVMEVDEPAVAATTSQNQPQEHANDFD) is disordered. The segment covering 12-21 (ATTSQNQPQE) has biased composition (polar residues). WD repeat units lie at residues 64–103 (TEAD…KYVK), 130–171 (EIDE…RKIG), 215–253 (AHTY…ESFN), 264–304 (ELTE…LCDA), 323–361 (EIIA…QPVE), and 378–419 (ENDS…DAKT). Residues 439–459 (SAKRKRNNLSSSGETTEEDLS) form a disordered region. A WD 7 repeat occupies 464-495 (QFDRKILHTAWHPKDNIIALAATNNLYIFSDV).

Belongs to the phosphatase 2A regulatory subunit B family. Part of a complex consisting of a common heterodimeric core enzyme, composed of catalytic subunit let-92 and constant regulatory subunit paa-1, that associates with a variety of regulatory subunits which confer distinct properties to the holoenzyme. Interacts with let-92.

The protein localises to the cytoplasm. Its function is as follows. Probable regulatory subunit of serine/threonine phosphatase let-92. Together with let-92 and constant regulatory subunit paa-1, positively regulates centriole duplication during early embryonic cell divisions by preventing the degradation of sas-5 and kinase zyg-1. In addition, during vulva development, may play a role with phosphatase let-92 and regulatory subunit paa-1 in the induction of vulva cell precursors by positively regulating let-60/Ras-MAP kinase signaling, probably by promoting lin-45 activation. In intestinal epithelial cells, may play a role in the late secretory pathway probably by regulating the exocyst, a protein complex involved in targeting secretory vesicles to the plasma membrane. This is Serine/threonine-protein phosphatase 2A regulatory subunit sur-6 from Caenorhabditis elegans.